Here is a 504-residue protein sequence, read N- to C-terminus: MKLLEQIEKWAIETPDQTAFVWRDAKITYKQLKEDSDALAHWISSEYPDDRSPIMVYGHMQPEMIINFLGCVKAGHAYIPVDLSIPADRVQRIAENSGAKLLLSGTEVTVTDLPVRIVSEDNLKDIFFTHKGNTPNPEHAVKGDENFYIIYTSGSTGNPKGVQITYNCLVSFTKWAVEDFNLQTGQVFLNQAPFSFDLSVMDIYPSLVTGGTLWAIDKDMIARPKDLFASLEQSDIQVWTSTPSFAEMCLMEASFSESMLPNMKTFLFCGEVLPNEVARKLIERFPKATIMNTYGPTEATVAVTGIHVTEEVLDQYKSLPVGYCKSDCRLLIMKEDGTIAPDGEKGEIVIVGPSVSVGYLGSPELTEKAFTMIDGERAYKTGDAGYVENGLLFYNGRLDFQIKLHGYRMELEEIEHHLRACSYVEGAVIVPIKKGEKYDYLLAVVVPGEHSFEKEFKLTSAIKKELNERLPNYMIPRKFMYQSSIPMTPNGKVDRKKLLSEVTA.

152–153 (TS) lines the ATP pocket. D197 serves as a coordination point for D-alanine. 292–297 (NTYGPT) is an ATP binding site. V301 provides a ligand contact to D-alanine. ATP is bound by residues D383, 394–397 (YNGR), and K492. Position 492 (K492) interacts with D-alanine.

This sequence belongs to the ATP-dependent AMP-binding enzyme family. DltA subfamily.

The protein localises to the cytoplasm. The enzyme catalyses holo-[D-alanyl-carrier protein] + D-alanine + ATP = D-alanyl-[D-alanyl-carrier protein] + AMP + diphosphate. It participates in cell wall biogenesis; lipoteichoic acid biosynthesis. Its function is as follows. Catalyzes the first step in the D-alanylation of lipoteichoic acid (LTA), the activation of D-alanine and its transfer onto the D-alanyl carrier protein (Dcp) DltC. In an ATP-dependent two-step reaction, forms a high energy D-alanyl-AMP intermediate, followed by transfer of the D-alanyl residue as a thiol ester to the phosphopantheinyl prosthetic group of the Dcp. D-alanylation of LTA plays an important role in modulating the properties of the cell wall in Gram-positive bacteria, influencing the net charge of the cell wall. The polypeptide is D-alanine--D-alanyl carrier protein ligase (Bacillus cereus (strain ATCC 10987 / NRS 248)).